Reading from the N-terminus, the 352-residue chain is Biotin synthase (352 aa).

In terms of domain architecture, Radical SAM core spans 44 to 262 (NRVQVSTLLS…LAVARILMPK (219 aa)). [4Fe-4S] cluster-binding residues include cysteine 59, cysteine 63, and cysteine 66. [2Fe-2S] cluster-binding residues include cysteine 103, cysteine 134, cysteine 194, and arginine 266.

This sequence belongs to the radical SAM superfamily. Biotin synthase family. As to quaternary structure, homodimer. It depends on [4Fe-4S] cluster as a cofactor. The cofactor is [2Fe-2S] cluster.

The catalysed reaction is (4R,5S)-dethiobiotin + (sulfur carrier)-SH + 2 reduced [2Fe-2S]-[ferredoxin] + 2 S-adenosyl-L-methionine = (sulfur carrier)-H + biotin + 2 5'-deoxyadenosine + 2 L-methionine + 2 oxidized [2Fe-2S]-[ferredoxin]. It functions in the pathway cofactor biosynthesis; biotin biosynthesis; biotin from 7,8-diaminononanoate: step 2/2. Functionally, catalyzes the conversion of dethiobiotin (DTB) to biotin by the insertion of a sulfur atom into dethiobiotin via a radical-based mechanism. This Pseudomonas entomophila (strain L48) protein is Biotin synthase.